We begin with the raw amino-acid sequence, 273 residues long: Ethanolamine ammonia-lyase small subunit (273 aa).

Positions 164, 185, and 214 each coordinate adenosylcob(III)alamin.

The protein belongs to the EutC family. In terms of assembly, the basic unit is a heterodimer which dimerizes to form tetramers. The heterotetramers trimerize; 6 large subunits form a core ring with 6 small subunits projecting outwards. Adenosylcob(III)alamin serves as cofactor.

Its subcellular location is the bacterial microcompartment. It catalyses the reaction ethanolamine = acetaldehyde + NH4(+). It participates in amine and polyamine degradation; ethanolamine degradation. Its function is as follows. Catalyzes the deamination of various vicinal amino-alcohols to oxo compounds. Allows this organism to utilize ethanolamine as the sole source of nitrogen and carbon in the presence of external vitamin B12. This Pseudomonas aeruginosa (strain LESB58) protein is Ethanolamine ammonia-lyase small subunit.